The following is a 73-amino-acid chain: Gastricsin (73 aa).

Residues 1–43 constitute a propeptide, activation peptide; it reads SVIKVPLKKLKSIRQAMKEKGLLEEFLKTHKYDPAQRYRIGDI. In terms of domain architecture, Peptidase A1 spans 57–73; that stretch reads YFGEISIGTPPQNFLVL.

Belongs to the peptidase A1 family.

It is found in the secreted. The catalysed reaction is More restricted specificity than pepsin A, but shows preferential cleavage at Tyr-|-Xaa bonds. High activity on hemoglobin.. Its function is as follows. Hydrolyzes a variety of proteins. The sequence is that of Gastricsin (PGC) from Sus scrofa (Pig).